Reading from the N-terminus, the 521-residue chain is MASSRASSTTTKTKAPDDLVAPVVKKPHIYYGSLEEKERERLAKGESGILGKEGLKAGIEAGNINITSGEVFEIEEHISERQAEVLAEFERRKRARQINVSTDDSEVKACLRALGEPITLFGEGPAERRERLRNILSVVGTDALKKTKKDDEKSKKSKEEYQQTWYHEGPNSLKVARLWIANYSLPRAMKRLEEARLHKEIPETTRTSQMQELHKSLRSLNNFCSQIGDDRPISYCHFSPNSKMLATACWSGLCKLWSVPDCSLLHTLRGHNTNVGAIVFHPKSTVSLDQKDVNLASCAADGSVKLWSLDSDEPVADIEGHTVRVARVMWHPSGRFLGTTCYDRSWRLWDLEAQEEILHQEGHSMGVYDIAFHQDGSLAGTGGLDAFGRVWDLRTGRCIMFLEGHLKEIYGINFSPNGYHIATGSGDNTCKVWDLRQRRCVYTIPAHQNLVTGVKFEPIHGDFLLTGAYDNTAKIWTHPGWSPLKTLAGHEGKVMGLDISSDGQLIATCSYDRTFKLWMAE.

N6-acetyllysine is present on Lys-26. WD repeat units lie at residues Gly-228–Thr-267, Gly-270–Asp-317, Gly-320–His-359, Gly-362–Phe-401, Gly-404–Thr-443, Ala-446–Thr-486, and Gly-489–Glu-521.

As to quaternary structure, component of the precatalytic spliceosome (spliceosome B complex). Component of the U4/U6-U5 tri-snRNP complex, a building block of the precatalytic spliceosome (spliceosome B complex). The U4/U6-U5 tri-snRNP complex is composed of the U4, U6 and U5 snRNAs and at least PRPF3, PRPF4, PRPF6, PRPF8, PRPF31, SNRNP200, TXNL4A, SNRNP40, SNRPB, SNRPD1, SNRPD2, SNRPD3, SNRPE, SNRPF, SNRPG, DDX23, CD2BP2, PPIH, SNU13, EFTUD2, SART1 and USP39, plus LSM2, LSM3, LSM4, LSM5, LSM6, LSM7 and LSM8. Interacts directly with PRPF18, PPIH and PRPF3. Part of a heteromeric complex containing PPIH, PRPF3 and PRPF4 that is stable in the absence of RNA. Interacts with ERCC6.

The protein localises to the nucleus. Its subcellular location is the nucleus speckle. Plays a role in pre-mRNA splicing as component of the U4/U6-U5 tri-snRNP complex that is involved in spliceosome assembly, and as component of the precatalytic spliceosome (spliceosome B complex). The sequence is that of U4/U6 small nuclear ribonucleoprotein Prp4 (Prpf4) from Mus musculus (Mouse).